Consider the following 498-residue polypeptide: Protein translocase subunit SecY (498 aa).

10 helical membrane-spanning segments follow: residues 23–43 (FVISVFVTLFLILLFRVISVI), 65–87 (FDLFNLLGGGGLSQLSLFAVGIS), 124–144 (ITRFVTLPFAVVQAFAIIALI), 163–183 (AFYIVTMTAGTYIGIFIGDII), 191–211 (GITLLILSGILARLPDGFIVM), 229–249 (AINFSLYFLAFLVLLLAISFV), 281–301 (AAGVIPVIFASSIMSIPITIA), 322–342 (PVGISLYVILIIIFTFFYSYI), 382–402 (FIGAPFLAIVAVIPYIISLVL), and 406–426 (TTLSLGGTGIIIMVSASMELY). The span at 478 to 488 (VEPTQDKKKNP) shows a compositional bias: basic and acidic residues. Residues 478-498 (VEPTQDKKKNPSDPLEVSQLW) are disordered.

The protein belongs to the SecY/SEC61-alpha family. In terms of assembly, component of the Sec protein translocase complex. Heterotrimer consisting of SecY, SecE and SecG subunits. The heterotrimers can form oligomers, although 1 heterotrimer is thought to be able to translocate proteins. Interacts with the ribosome. Interacts with SecDF, and other proteins may be involved. Interacts with SecA.

The protein localises to the cell membrane. The central subunit of the protein translocation channel SecYEG. Consists of two halves formed by TMs 1-5 and 6-10. These two domains form a lateral gate at the front which open onto the bilayer between TMs 2 and 7, and are clamped together by SecE at the back. The channel is closed by both a pore ring composed of hydrophobic SecY resides and a short helix (helix 2A) on the extracellular side of the membrane which forms a plug. The plug probably moves laterally to allow the channel to open. The ring and the pore may move independently. The chain is Protein translocase subunit SecY from Mycoplasmoides gallisepticum (strain R(low / passage 15 / clone 2)) (Mycoplasma gallisepticum).